A 70-amino-acid polypeptide reads, in one-letter code: U-scutigerotoxin(02)-Tl1a (70 aa).

Positions 1-17 (MKYILLGLLLMVVLANA) are cleaved as a signal peptide.

It belongs to the scutigerotoxin-02 family. Post-translationally, contains 4 disulfide bonds. As to expression, expressed by the venom gland.

The protein localises to the secreted. The sequence is that of U-scutigerotoxin(02)-Tl1a from Thereuopoda longicornis (Long-legged centipede).